The following is a 954-amino-acid chain: Bifunctional endo-1,4-beta-xylanase XylA (954 aa).

Positions 1 to 27 (MKLSKIKKVLSGTVSALMIASAAPVVA) form a signal peptide, or 28, or 29. Residues 29–236 (AADQQTRGNV…SNGSANVKSV (208 aa)) enclose the GH11 domain. Glu122 (nucleophile) is an active-site residue. Glu223 functions as the Proton donor in the catalytic mechanism. Polar residues predominate over residues 233 to 243 (VKSVSVTQGGS). A disordered region spans residues 233 to 628 (VKSVSVTQGG…NNNNSAGSSD (396 aa)). Residues 246-622 (NGGQQQNNDW…WNQGQQNNNN (377 aa)) show a composition bias toward low complexity. One can recognise a GH10 domain in the interval 624–952 (AGSSDSLKGA…KPAYDRVMAL (329 aa)). The active-site Proton donor is the Glu774. Glu884 (nucleophile) is an active-site residue.

It in the N-terminal section; belongs to the glycosyl hydrolase 11 (cellulase G) family. In the C-terminal section; belongs to the glycosyl hydrolase 10 (cellulase F) family.

It catalyses the reaction Endohydrolysis of (1-&gt;4)-beta-D-xylosidic linkages in xylans.. The protein operates within glycan degradation; xylan degradation. Its function is as follows. Xylanase domain releases more xylo-oligosaccharides and GH10 domain more xylose. This chain is Bifunctional endo-1,4-beta-xylanase XylA (xynA), found in Ruminococcus flavefaciens.